Here is a 403-residue protein sequence, read N- to C-terminus: E2F transcription factor-like E2FE (403 aa).

A DNA-binding region spans residues 34–99 (RKQKSLGLLC…RAKNQYTWKG (66 aa)). The segment at 128 to 167 (VKGSDDEDDDEESSQPHSSSQTDSSKPGSLPQSSDPSKID) is disordered. Over residues 142 to 152 (QPHSSSQTDSS) the composition is skewed to low complexity. Positions 153–163 (KPGSLPQSSDP) are enriched in polar residues. A DNA-binding region spans residues 169 to 250 (RREKSLGLLT…SRKPAFKWLG (82 aa)). The tract at residues 282–319 (VKRSKSSSSSQENATERRLKMKKHSTPESSYNKSFDVH) is disordered.

Belongs to the E2F/DP family. Expressed exclusively in mitotically dividing cells. Highly expressed in young leaves and mature flowers. Lower expression in young stalk and in young and mature flowers.

It is found in the nucleus. Its function is as follows. Inhibitor of E2F-dependent activation of gene expression. Binds specifically the E2 recognition site without interacting with DP proteins and prevents transcription activation by E2F/DP heterodimers. Controls the timing of endocycle onset and inhibits endoreduplication. The sequence is that of E2F transcription factor-like E2FE (E2FE) from Arabidopsis thaliana (Mouse-ear cress).